The sequence spans 366 residues: Ribosomal RNA large subunit methyltransferase M (366 aa).

S-adenosyl-L-methionine contacts are provided by residues Ser188, 221–224, Asp240, Asp260, and Asp277; that span reads CPGG. The Proton acceptor role is filled by Lys306.

The protein belongs to the class I-like SAM-binding methyltransferase superfamily. RNA methyltransferase RlmE family. RlmM subfamily. In terms of assembly, monomer.

Its subcellular location is the cytoplasm. The enzyme catalyses cytidine(2498) in 23S rRNA + S-adenosyl-L-methionine = 2'-O-methylcytidine(2498) in 23S rRNA + S-adenosyl-L-homocysteine + H(+). Functionally, catalyzes the 2'-O-methylation at nucleotide C2498 in 23S rRNA. This chain is Ribosomal RNA large subunit methyltransferase M, found in Dickeya chrysanthemi (strain Ech1591) (Dickeya zeae (strain Ech1591)).